We begin with the raw amino-acid sequence, 397 residues long: Linalool dehydratase/isomerase (397 aa).

Positions Met1 to Ala26 are cleaved as a signal peptide. The Proton donor/acceptor role is filled by Asp64. Cystine bridges form between Cys74–Cys127 and Cys196–Cys205. Cys196 is a binding site for (2E)-geraniol.

In terms of assembly, homotetramer. Homopentamer.

It is found in the periplasm. It catalyses the reaction (S)-linalool = beta-myrcene + H2O. It carries out the reaction (2E)-geraniol = (S)-linalool. It participates in terpene metabolism; monoterpene degradation. Is inhibited by molecular oxygen, high salt concentrations (NaCl, KCl, or MgCl(2)), urea, and Ti(III)citrate. Activity is not affected by EDTA. Its function is as follows. Anaerobically catalyzes the stereospecific hydration of beta-myrcene to (3S)-linalool and the isomerization of (3S)-linalool to geraniol. Is thus involved in the initial steps of the anaerobic degradation of the monoterpene beta-myrcene. Also catalyzes the reverse reactions, i.e. the isomerization of geraniol to linalool and the dehydration of linalool to myrcene. In this direction, the formation of myrcene from geraniol may be seen as a detoxification process for the monoterpene alcohol. Shows a relatively broad substrate specificity and can use various geraniol and linalool derivatives. Substrates required a specific alpha-methylallyl alcohol signature motif. Neither the monoterpenes alpha- and beta-ocimene nor the monoterpenoids citronellol and nerol can be used as substrates. The protein is Linalool dehydratase/isomerase of Castellaniella defragrans (strain DSM 12143 / CCUG 39792 / 65Phen) (Alcaligenes defragrans).